The chain runs to 200 residues: Serotonin N-acetyltransferase 2, chloroplastic (200 aa).

A chloroplast-targeting transit peptide spans 1–41 (MQMQAARPRVGVRPRGGIRPFPLPTLSFNNNSNRSACACAC). An N-acetyltransferase domain is found at 55–195 (FAVRRSSTGL…MAFYRSRQQI (141 aa)).

The protein localises to the cytoplasm. Its subcellular location is the plastid. It localises to the chloroplast. The enzyme catalyses serotonin + acetyl-CoA = N-acetylserotonin + CoA + H(+). It carries out the reaction tyramine + acetyl-CoA = N-acetyltyramine + CoA + H(+). The catalysed reaction is tryptamine + acetyl-CoA = N-acetyltryptamine + CoA + H(+). It catalyses the reaction 5-methoxytryptamine + acetyl-CoA = melatonin + CoA + H(+). The protein operates within aromatic compound metabolism; melatonin biosynthesis; melatonin from serotonin: step 1/2. Its function is as follows. Catalyzes the N-acetylation of serotonin into N-acetylserotonin, the penultimate step in the synthesis of melatonin. Catalyzes in vitro the N-acetylation of tryptamine to produce N-acetyltryptamine, 5-methoxytryptamine to produce melatonin and tyramine to produce N-acetyltyramine. The polypeptide is Serotonin N-acetyltransferase 2, chloroplastic (Oryza sativa subsp. japonica (Rice)).